We begin with the raw amino-acid sequence, 173 residues long: Large ribosomal subunit protein uL16 (173 aa).

Belongs to the universal ribosomal protein uL16 family.

This Methanosphaerula palustris (strain ATCC BAA-1556 / DSM 19958 / E1-9c) protein is Large ribosomal subunit protein uL16.